Consider the following 403-residue polypeptide: Chalcone synthase 3 (403 aa).

Residue Cys170 is part of the active site.

Belongs to the thiolase-like superfamily. Chalcone/stilbene synthases family.

It carries out the reaction (E)-4-coumaroyl-CoA + 3 malonyl-CoA + 3 H(+) = 2',4,4',6'-tetrahydroxychalcone + 3 CO2 + 4 CoA. Its pathway is secondary metabolite biosynthesis; flavonoid biosynthesis. Its function is as follows. The primary product of this enzyme is 4,2',4',6'-tetrahydroxychalcone (also termed naringenin-chalcone or chalcone) which can under specific conditions spontaneously isomerize into naringenin. In Gerbera hybrida (Daisy), this protein is Chalcone synthase 3 (CHS3).